The following is a 1890-amino-acid chain: MADSQSGSNVFSLRIVSIDYYMASPIPGYNICYSSFQGSEVNEVPVIRIYGSTPAGQKTCLHIHRALPYLYIPCSEIPLEHHKGVDGSTLALSLELEKALKLKGNAASKRQHIHDCEIVRAKKFYGYHSTEEAFVKIYLSYHPPDVARAASLLLAGAVLGKSLQPYESHIPFILQFLVDYNLYGMGHVHISKMKFRSPVPHHFRPRRFDLDDCPGQRIDEVAITKANSSAAASVSFPVWSLSTIPGQWMWNLSEESDTPLSQSQHRHQHHYRRQSLCELEGDATSSDILNQQFKMYNSLSQAQSDTNMVQSLVAIWEEEYERTGVHDAPIPPDPGKPSAADVLQTMSDYVGFGNMLKEMLNKVELSPPGMKPTAVSSAGPDMHAKPEITDLQALNHMVGTCSEFPASEQLSPLGEKSEEASMENDEYMKTPTDRDTPAQIQDAEALGLFKWFASSQAAEDINSDDEILRETILSPLLPLASINKVLEMASTDYVSQSQKECQDILDSQENLPDFGSSTKRALPSNPDSQNLRTSSDKQSLEIEVASDVPDSSTSNGASENSFRRYRKSDLHTSEVMEYKNRSFSKSNKPSNSVWGPLPFTLTKNLQKDFDSTNASDKLGLTKISSYPMNEMTDNYIVPVKEHQADVCNTIDRNVLAGCSLRDLMRKKRLCHGESPVSQHMKSRKVRDSRHGEKNECTLRCEAKKQGPALSAEFSEFVCGDTPNLSPIDSGNCECNISTESSELHSVDRCSAKETASQNSDEVLRNLSSTTVPFGKDPQTVESGTLVSSNIHVGIEIDSVQKSGREQESTANETDETGRLICLTLSKKPPSLDCLSAGLQDSAHSHEIHAREKQHDEYEGNSNDIPFFPLEDNKEEKKHFFQGTSLGIPLHHLNDGSNLYLLTPAFSPPSVDSVLQWISNDKGDSNIDSEKQPLRDNHNDRGASFTDLASASNVVSVSEHVEQHNNLFVNSESNAYTESEIDLKPKGTFLNLNLQASVSQELSQISGPDGKSGPTPLSQMGFRDPASMGAGQQLTILSIEVHAESRGDLRPDPRFDSVNVIALVVQNDDSFVAEVFVLLFSPDSIDQRNVDGLSGCKLSVFLEERQLFRYFIETLCKWDPDVLLGWDIQGGSIGFLAERAAQLGIRFLNNISRTPSPTTTNNSDNKRKLGNNLLPDPLVANPAQVEEVVIEDEWGRTHASGVHVGGRIVLNAWRLIRGEVKLNMYTIEAVSEAVLRQKVPSIPYKVLTEWFSSGPAGARYRCIEYVIRRANLNLEIMSQLDMINRTSELARVFGIDFFSVLSRGSQYRVESMLLRLAHTQNYLAISPGNQQVASQPAMECVPLVMEPESAFYDDPVIVLDFQSLYPSMIIAYNLCFSTCLGKLAHLKMNTLGVSSYSLDLDVLQDLNQILQTPNSVMYVPPEVRRGILPRLLEEILSTRIMVKKAMKKLTPSEAVLHRIFNARQLALKLIANVTYGYTAAGFSGRMPCAELADSIVQCGRSTLEKAISFVNANDNWNARVVYGDTDSMFVLLKGRTVKEAFVVGQEIASAITEMNPHPVTLKMEKVYHPCFLLTKKRYVGYSYESPNQREPIFDAKGIETVRRDTCEAVAKTMEQSLRLFFEQKNISKVKSYLYRQWKRILSGRVSLQDFIFAKEVRLGTYSTRDSSLLPPAAIVATKSMKADPRTEPRYAERVPYVVIHGEPGARLVDMVVDPLVLLDVDTPYRLNDLYYINKQIIPALQRVFGLVGADLNQWFLEMPRLTRSSLGQRPLNSKNSHKTRIDYFYLSKHCILCGEVVQESAQLCNRCLQNKSAAAATIVWKTSKLEREMQHLATICRHCGGGDWVVQSGVKCNSLACSVFYERRKVQKELRGLSSIATESELYPKCMAEWF.

Composition is skewed to polar residues over residues 508-533 (QENL…NLRT) and 549-560 (PDSSTSNGASEN). Disordered regions lie at residues 508-565 (QENL…FRRY) and 922-942 (GDSN…DRGA). The span at 922 to 940 (GDSNIDSEKQPLRDNHNDR) shows a compositional bias: basic and acidic residues. Zn(2+)-binding residues include Cys-1789, Cys-1792, Cys-1803, and Cys-1806. A CysA-type zinc finger spans residues 1789–1806 (CILCGEVVQESAQLCNRC). 4 residues coordinate [4Fe-4S] cluster: Cys-1835, Cys-1838, Cys-1851, and Cys-1856. Positions 1835-1856 (CRHCGGGDWVVQSGVKCNSLAC) match the CysB motif motif.

It belongs to the DNA polymerase type-B family. Forms DNA polymerase zeta with REV7. [4Fe-4S] cluster serves as cofactor. In terms of tissue distribution, expressed in roots, leaves and flowers.

It localises to the nucleus. It carries out the reaction DNA(n) + a 2'-deoxyribonucleoside 5'-triphosphate = DNA(n+1) + diphosphate. Its function is as follows. Catalytic subunit of the error prone DNA polymerase zeta. Involved in damage-tolerance mechanisms through translesion DNA synthesis. This chain is DNA polymerase zeta catalytic subunit (REV3), found in Arabidopsis thaliana (Mouse-ear cress).